The following is a 214-amino-acid chain: Ceramide-1-phosphate transfer protein (214 aa).

An N-acylsphingoid base 1-phosphate contacts are provided by Asp-56, Lys-60, Arg-106, Arg-110, and His-150.

The protein belongs to the GLTP family. In terms of tissue distribution, ubiquitous. Detected in heart, brain, placenta, lung, liver, skeletal muscle, kidney, pancreas, spleen, thymus, prostate, testis, ovary, small intestine, colon and peripheral blood leukocytes.

It localises to the cytoplasm. The protein resides in the cytosol. The protein localises to the golgi apparatus. It is found in the trans-Golgi network membrane. Its subcellular location is the cell membrane. It localises to the endosome membrane. The protein resides in the nucleus outer membrane. The catalysed reaction is N-(hexadecanoyl)-sphing-4-enine-1-phosphate(in) = N-(hexadecanoyl)-sphing-4-enine-1-phosphate(out). It carries out the reaction N-(9Z-octadecenoyl)-sphing-4-enine-1-phosphate(in) = N-(9Z-octadecenoyl)-sphing-4-enine-1-phosphate(out). In terms of biological role, mediates the intracellular transfer of ceramide-1-phosphate (C1P) between organelle membranes and the cell membrane. Required for normal structure of the Golgi stacks. Can bind phosphoceramides with a variety of aliphatic chains, but has a preference for lipids with saturated C16:0 or monounsaturated C18:1 aliphatic chains, and is inefficient with phosphoceramides containing lignoceryl (C24:0). Plays a role in the regulation of the cellular levels of ceramide-1-phosphate, and thereby contributes to the regulation of phospholipase PLA2G4A activity and the release of arachidonic acid. Has no activity with galactosylceramide, lactosylceramide, sphingomyelin, phosphatidylcholine, phosphatidic acid and ceramide. C1P transfer is stimulated by phosphatidylserine in C1P source vesicles. Regulates autophagy, inflammasome mediated IL1B and IL18 processing, and pyroptosis, but not apoptosis. The chain is Ceramide-1-phosphate transfer protein from Homo sapiens (Human).